The following is a 455-amino-acid chain: Bifunctional protein GlmU (455 aa).

The pyrophosphorylase stretch occupies residues 1–226 (MSLDIVILAA…AMEVQGANDR (226 aa)). UDP-N-acetyl-alpha-D-glucosamine-binding positions include 8–11 (LAAG), Lys22, Gln73, 78–79 (GT), 99–101 (YGD), Gly136, Glu151, Asn166, and Asn224. Asp101 contacts Mg(2+). Mg(2+) is bound at residue Asn224. Residues 227 to 247 (RQLSELERHYQLREGRRLMAQ) form a linker region. The segment at 248 to 455 (GVTLRDPARF…WKRPEKIKKS (208 aa)) is N-acetyltransferase. Residues Arg330 and Lys348 each coordinate UDP-N-acetyl-alpha-D-glucosamine. The active-site Proton acceptor is the His360. Positions 363 and 374 each coordinate UDP-N-acetyl-alpha-D-glucosamine. Residues Ala377, 383–384 (NY), Ser402, Ala420, and Arg437 contribute to the acetyl-CoA site.

In the N-terminal section; belongs to the N-acetylglucosamine-1-phosphate uridyltransferase family. The protein in the C-terminal section; belongs to the transferase hexapeptide repeat family. Homotrimer. It depends on Mg(2+) as a cofactor.

It is found in the cytoplasm. The catalysed reaction is alpha-D-glucosamine 1-phosphate + acetyl-CoA = N-acetyl-alpha-D-glucosamine 1-phosphate + CoA + H(+). It catalyses the reaction N-acetyl-alpha-D-glucosamine 1-phosphate + UTP + H(+) = UDP-N-acetyl-alpha-D-glucosamine + diphosphate. It participates in nucleotide-sugar biosynthesis; UDP-N-acetyl-alpha-D-glucosamine biosynthesis; N-acetyl-alpha-D-glucosamine 1-phosphate from alpha-D-glucosamine 6-phosphate (route II): step 2/2. The protein operates within nucleotide-sugar biosynthesis; UDP-N-acetyl-alpha-D-glucosamine biosynthesis; UDP-N-acetyl-alpha-D-glucosamine from N-acetyl-alpha-D-glucosamine 1-phosphate: step 1/1. Its pathway is bacterial outer membrane biogenesis; LPS lipid A biosynthesis. Functionally, catalyzes the last two sequential reactions in the de novo biosynthetic pathway for UDP-N-acetylglucosamine (UDP-GlcNAc). The C-terminal domain catalyzes the transfer of acetyl group from acetyl coenzyme A to glucosamine-1-phosphate (GlcN-1-P) to produce N-acetylglucosamine-1-phosphate (GlcNAc-1-P), which is converted into UDP-GlcNAc by the transfer of uridine 5-monophosphate (from uridine 5-triphosphate), a reaction catalyzed by the N-terminal domain. The polypeptide is Bifunctional protein GlmU (Pseudomonas putida (strain ATCC 47054 / DSM 6125 / CFBP 8728 / NCIMB 11950 / KT2440)).